Reading from the N-terminus, the 297-residue chain is N-acetylneuraminate lyase (297 aa).

Residues serine 47 and threonine 48 each coordinate aceneuramate. Tyrosine 137 functions as the Proton donor in the catalytic mechanism. The active-site Schiff-base intermediate with substrate is lysine 165. Positions 167, 189, 191, 192, and 208 each coordinate aceneuramate.

This sequence belongs to the DapA family. NanA subfamily. Homotetramer.

The protein localises to the cytoplasm. The enzyme catalyses aceneuramate = aldehydo-N-acetyl-D-mannosamine + pyruvate. It participates in amino-sugar metabolism; N-acetylneuraminate degradation; D-fructose 6-phosphate from N-acetylneuraminate: step 1/5. Functionally, catalyzes the reversible aldol cleavage of N-acetylneuraminic acid (sialic acid; Neu5Ac) to form pyruvate and N-acetylmannosamine (ManNAc) via a Schiff base intermediate. This chain is N-acetylneuraminate lyase, found in Escherichia coli (strain SE11).